A 583-amino-acid polypeptide reads, in one-letter code: RuBisCO large subunit-binding protein subunit alpha, chloroplastic (583 aa).

Over residues 1 to 14 (MATANALSSPSVLC) the composition is skewed to polar residues. The disordered stretch occupies residues 1–35 (MATANALSSPSVLCSSRQGKLSGGSQQKGQRVSYR). The N-terminal 45 residues, 1 to 45 (MATANALSSPSVLCSSRQGKLSGGSQQKGQRVSYRKANRRFSLRA), are a transit peptide targeting the chloroplast. A compositionally biased stretch (low complexity) spans 15 to 31 (SSRQGKLSGGSQQKGQR). S89 carries the phosphoserine modification.

This sequence belongs to the chaperonin (HSP60) family. Oligomer of probably six alpha and six beta subunits.

The protein localises to the plastid. It is found in the chloroplast. This protein binds RuBisCO small and large subunits and is implicated in the assembly of the enzyme oligomer. The polypeptide is RuBisCO large subunit-binding protein subunit alpha, chloroplastic (Brassica napus (Rape)).